We begin with the raw amino-acid sequence, 1173 residues long: Ubiquitin conjugation factor E4 B (1173 aa).

The residue at position 1 (Met-1) is an N-acetylmethionine. Positions 1–155 (MEELSADEIR…EPSSGPEVSE (155 aa)) are disordered. A compositionally biased stretch (low complexity) spans 16-33 (RLAGGQTSQPTTPLTSPQ). 2 positions are modified to phosphoserine: Ser-23 and Ser-31. The segment covering 51-64 (QSLGLNVHNMTPAT) has biased composition (polar residues). Over residues 76 to 99 (SQSSEGVSSLSSSPSNSLETQSQS) the composition is skewed to low complexity. Residues Ser-84, Ser-88, Ser-90, Ser-101, Ser-103, Ser-105, and Ser-124 each carry the phosphoserine modification. Over residues 134 to 147 (NDRREKRSLSDKEP) the composition is skewed to basic and acidic residues. Ser-238, Ser-674, and Ser-840 each carry phosphoserine. The disordered stretch occupies residues 928 to 948 (NKEQWDQLPRDQQQARQSQLA). Positions 937–948 (RDQQQARQSQLA) are enriched in low complexity. The U-box domain occupies 1098–1171 (DAPDEFRDPL…QAWMREKQSS (74 aa)). Ser-1136 is modified (phosphoserine).

Belongs to the ubiquitin conjugation factor E4 family. In terms of assembly, interacts with VCP. Interacts with STUB1/CHIP and UNC45B. In terms of processing, proteolytically cleaved by caspases during apoptosis. Cleaved efficiently at Asp-123 by caspase-6 and granzyme B. Cleaved with approximately 10-fold less efficiency at Asp-109 by caspase-3 and caspase-7. As to expression, expressed predominantly in neuronal tissues. Also detected in liver, heart, brain, kidney and testis.

Its subcellular location is the cytoplasm. It localises to the nucleus. The enzyme catalyses S-ubiquitinyl-[E2 ubiquitin-conjugating enzyme]-L-cysteine + [acceptor protein]-L-lysine = [E2 ubiquitin-conjugating enzyme]-L-cysteine + N(6)-ubiquitinyl-[acceptor protein]-L-lysine.. It functions in the pathway protein modification; protein ubiquitination. Ubiquitin-protein ligase that probably functions as an E3 ligase in conjunction with specific E1 and E2 ligases. May also function as an E4 ligase mediating the assembly of polyubiquitin chains on substrates ubiquitinated by another E3 ubiquitin ligase. May regulate myosin assembly in striated muscles together with STUB1 and VCP/p97 by targeting myosin chaperone UNC45B for proteasomal degradation. The protein is Ubiquitin conjugation factor E4 B of Mus musculus (Mouse).